An 856-amino-acid chain; its full sequence is Bifunctional uridylyltransferase/uridylyl-removing enzyme (856 aa).

The interval 1-320 (MTLSAAPLQH…YCQVPRVTQH (320 aa)) is uridylyltransferase. A uridylyl-removing region spans residues 321–678 (ISEYFHAVNG…ARLADDHEGL (358 aa)). Residues 439 to 561 (VDEHILMVVR…VRTPRRLAAL (123 aa)) enclose the HD domain. 2 ACT domains span residues 679-760 (QVLI…LPPQ) and 788-856 (ILSI…ALRI).

It belongs to the GlnD family. Requires Mg(2+) as cofactor.

It catalyses the reaction [protein-PII]-L-tyrosine + UTP = [protein-PII]-uridylyl-L-tyrosine + diphosphate. The enzyme catalyses [protein-PII]-uridylyl-L-tyrosine + H2O = [protein-PII]-L-tyrosine + UMP + H(+). Uridylyltransferase (UTase) activity is inhibited by glutamine, while glutamine activates uridylyl-removing (UR) activity. Functionally, modifies, by uridylylation and deuridylylation, the PII regulatory proteins (GlnB and homologs), in response to the nitrogen status of the cell that GlnD senses through the glutamine level. Under low glutamine levels, catalyzes the conversion of the PII proteins and UTP to PII-UMP and PPi, while under higher glutamine levels, GlnD hydrolyzes PII-UMP to PII and UMP (deuridylylation). Thus, controls uridylylation state and activity of the PII proteins, and plays an important role in the regulation of nitrogen assimilation and metabolism. In Chromobacterium violaceum (strain ATCC 12472 / DSM 30191 / JCM 1249 / CCUG 213 / NBRC 12614 / NCIMB 9131 / NCTC 9757 / MK), this protein is Bifunctional uridylyltransferase/uridylyl-removing enzyme.